The chain runs to 396 residues: Elongation factor Tu (396 aa).

The tr-type G domain maps to 10-206 (KAHVNIGTIG…AVDEYIPDPV (197 aa)). The segment at 19–26 (GHVDHGKT) is G1. 19–26 (GHVDHGKT) provides a ligand contact to GTP. Residue Thr26 coordinates Mg(2+). The G2 stretch occupies residues 62–66 (GITIN). The segment at 83 to 86 (DAPG) is G3. Residues 83–87 (DAPGH) and 138–141 (NKSD) each bind GTP. The interval 138 to 141 (NKSD) is G4. Positions 176–178 (SAL) are G5.

It belongs to the TRAFAC class translation factor GTPase superfamily. Classic translation factor GTPase family. EF-Tu/EF-1A subfamily. As to quaternary structure, monomer.

The protein resides in the cytoplasm. The enzyme catalyses GTP + H2O = GDP + phosphate + H(+). Its function is as follows. GTP hydrolase that promotes the GTP-dependent binding of aminoacyl-tRNA to the A-site of ribosomes during protein biosynthesis. This Micrococcus luteus (Micrococcus lysodeikticus) protein is Elongation factor Tu.